A 567-amino-acid polypeptide reads, in one-letter code: DNA ligase B (567 aa).

Residue Lys132 is the N6-AMP-lysine intermediate of the active site.

Belongs to the NAD-dependent DNA ligase family. LigB subfamily.

It carries out the reaction NAD(+) + (deoxyribonucleotide)n-3'-hydroxyl + 5'-phospho-(deoxyribonucleotide)m = (deoxyribonucleotide)n+m + AMP + beta-nicotinamide D-nucleotide.. In terms of biological role, catalyzes the formation of phosphodiester linkages between 5'-phosphoryl and 3'-hydroxyl groups in double-stranded DNA using NAD as a coenzyme and as the energy source for the reaction. This is DNA ligase B from Yersinia pseudotuberculosis serotype O:1b (strain IP 31758).